The following is a 236-amino-acid chain: Proteasome subunit beta type-1 (236 aa).

This sequence belongs to the peptidase T1B family. In terms of assembly, the 26S proteasome consists of a 20S proteasome core and two 19S regulatory subunits. The 20S proteasome core is composed of 28 subunits that are arranged in four stacked rings, resulting in a barrel-shaped structure. The two end rings are each formed by seven alpha subunits, and the two central rings are each formed by seven beta subunits. The catalytic chamber with the active sites is on the inside of the barrel.

The protein localises to the cytoplasm. Its subcellular location is the nucleus. Non-catalytic component of the proteasome, a multicatalytic proteinase complex which is characterized by its ability to cleave peptides with Arg, Phe, Tyr, Leu, and Glu adjacent to the leaving group at neutral or slightly basic pH. The proteasome has an ATP-dependent proteolytic activity. This chain is Proteasome subunit beta type-1 (psmB1), found in Dictyostelium discoideum (Social amoeba).